Here is a 162-residue protein sequence, read N- to C-terminus: Protein-export protein SecB 2 (162 aa).

Belongs to the SecB family. Homotetramer, a dimer of dimers. One homotetramer interacts with 1 SecA dimer.

It localises to the cytoplasm. In terms of biological role, one of the proteins required for the normal export of preproteins out of the cell cytoplasm. It is a molecular chaperone that binds to a subset of precursor proteins, maintaining them in a translocation-competent state. It also specifically binds to its receptor SecA. The sequence is that of Protein-export protein SecB 2 from Polaromonas naphthalenivorans (strain CJ2).